A 329-amino-acid polypeptide reads, in one-letter code: Flotillin-like protein FloA (329 aa).

Transmembrane regions (helical) follow at residues 4–24 and 26–46; these read IAFI…FAIV and VGLW…TLIG.

It belongs to the flotillin-like FloA family. Homooligomerizes.

It localises to the cell membrane. The protein resides in the membrane raft. Its function is as follows. Found in functional membrane microdomains (FMM) that may be equivalent to eukaryotic membrane rafts. FMMs are highly dynamic and increase in number as cells age. Flotillins are thought to be important factors in membrane fluidity. In Acetivibrio thermocellus (strain ATCC 27405 / DSM 1237 / JCM 9322 / NBRC 103400 / NCIMB 10682 / NRRL B-4536 / VPI 7372) (Clostridium thermocellum), this protein is Flotillin-like protein FloA.